A 176-amino-acid polypeptide reads, in one-letter code: Large ribosomal subunit protein uL6 (176 aa).

A compositionally biased stretch (basic and acidic residues) spans 151-170 (RPPEPYKGKGVRYADEQVRR). A disordered region spans residues 151 to 176 (RPPEPYKGKGVRYADEQVRRKEAKKK).

The protein belongs to the universal ribosomal protein uL6 family. As to quaternary structure, part of the 50S ribosomal subunit.

Functionally, this protein binds to the 23S rRNA, and is important in its secondary structure. It is located near the subunit interface in the base of the L7/L12 stalk, and near the tRNA binding site of the peptidyltransferase center. This is Large ribosomal subunit protein uL6 from Shewanella loihica (strain ATCC BAA-1088 / PV-4).